We begin with the raw amino-acid sequence, 1106 residues long: Protein kinase C (1106 aa).

An REM-1 1 domain is found at 1–67 (MDGDDLIASV…MRELQLRQMK (67 aa)). A disordered region spans residues 65–138 (QMKQEGASPT…PRPFAPVPKA (74 aa)). Pro residues predominate over residues 79–93 (PPNPDGSAPVPPPKD). The REM-1 2 domain occupies 149-226 (KYDTPYLGPK…LKRYEDLHVD (78 aa)). Residues 232–350 (APDDESLSTP…MRRKKIESEF (119 aa)) form the C2 domain. Residues 361 to 370 (MEHGAAHGRQ) show a composition bias toward basic and acidic residues. Residues 361–400 (MEHGAAHGRQDAGGAPGSSNRPPSGGHSGGPGQGYAGGAP) are disordered. A compositionally biased stretch (gly residues) spans 386 to 400 (GHSGGPGQGYAGGAP). 2 Phorbol-ester/DAG-type zinc fingers span residues 460-508 (GHKF…VTKC) and 528-578 (PHRF…PDFC). Polar residues-rich tracts occupy residues 600-609 (KSASVSSGLS) and 658-668 (YIPPQSPTAAQ). Disordered regions lie at residues 600 to 625 (KSAS…PQDN) and 658 to 719 (YIPP…HAHY). Residues 683–693 (AAAAAAAAAAA) are compositionally biased toward low complexity. In terms of domain architecture, Protein kinase spans 781–1040 (FNFLAVLGKG…AQEVMSHAFF (260 aa)). Residues 787–795 (LGKGNFGKV) and lysine 810 contribute to the ATP site. Aspartate 906 serves as the catalytic Proton acceptor. The region spanning 1041 to 1106 (RNINWDDIYH…RGFSYTADFA (66 aa)) is the AGC-kinase C-terminal domain. Threonine 1082 carries the post-translational modification Phosphothreonine. Serine 1100 carries the post-translational modification Phosphoserine. Tyrosine 1101 carries the post-translational modification Phosphotyrosine.

The protein belongs to the protein kinase superfamily. AGC Ser/Thr protein kinase family. PKC subfamily. In terms of assembly, interacts with hsp90.

The enzyme catalyses L-seryl-[protein] + ATP = O-phospho-L-seryl-[protein] + ADP + H(+). It catalyses the reaction L-threonyl-[protein] + ATP = O-phospho-L-threonyl-[protein] + ADP + H(+). Protein kinase C; part of cell wall integrity (CWI) signaling pathway composed of pkcA, the bck1-mkk2-mpka MAPK cascade and the downstream rlmA transcription regulator. The CWI signaling pathway regulates cell wall integrity and pyomelanin formation. CWI also controls oxidative stress response, gliotoxin production, iron adaptation and asexual development. Finally, CWI is constitutively required for A.fumigatus to cope with the temperature increase found in the mammalian lung environment, during infection. Modulates the expression of fumiquinazoline cluster during conidiogenesis. In Aspergillus fumigatus (strain ATCC MYA-4609 / CBS 101355 / FGSC A1100 / Af293) (Neosartorya fumigata), this protein is Protein kinase C.